The primary structure comprises 425 residues: Dual-specificity RNA methyltransferase RlmN (425 aa).

The active-site Proton acceptor is glutamate 136. The Radical SAM core domain maps to 142 to 381 (GDDRGTLCVS…FTAGYASPVR (240 aa)). An intrachain disulfide couples cysteine 149 to cysteine 392. Residues cysteine 156, cysteine 160, and cysteine 163 each contribute to the [4Fe-4S] cluster site. Residues 218–219 (GE), serine 250, 272–274 (SLH), and asparagine 349 contribute to the S-adenosyl-L-methionine site. The active-site S-methylcysteine intermediate is the cysteine 392.

Belongs to the radical SAM superfamily. RlmN family. The cofactor is [4Fe-4S] cluster.

It localises to the cytoplasm. The enzyme catalyses adenosine(2503) in 23S rRNA + 2 reduced [2Fe-2S]-[ferredoxin] + 2 S-adenosyl-L-methionine = 2-methyladenosine(2503) in 23S rRNA + 5'-deoxyadenosine + L-methionine + 2 oxidized [2Fe-2S]-[ferredoxin] + S-adenosyl-L-homocysteine. It carries out the reaction adenosine(37) in tRNA + 2 reduced [2Fe-2S]-[ferredoxin] + 2 S-adenosyl-L-methionine = 2-methyladenosine(37) in tRNA + 5'-deoxyadenosine + L-methionine + 2 oxidized [2Fe-2S]-[ferredoxin] + S-adenosyl-L-homocysteine. Specifically methylates position 2 of adenine 2503 in 23S rRNA and position 2 of adenine 37 in tRNAs. m2A2503 modification seems to play a crucial role in the proofreading step occurring at the peptidyl transferase center and thus would serve to optimize ribosomal fidelity. The polypeptide is Dual-specificity RNA methyltransferase RlmN (Methylorubrum extorquens (strain PA1) (Methylobacterium extorquens)).